The sequence spans 637 residues: Interleukin-17 receptor E (637 aa).

The first 24 residues, 1–24, serve as a signal peptide directing secretion; it reads MGSPRLAALLLSQPLLFICLAVSA. Residues 25-415 are Extracellular-facing; the sequence is QVACPCLPRW…LCPDVSHRHL (391 aa). N-linked (GlcNAc...) asparagine glycosylation is found at Asn-278 and Asn-307. A helical transmembrane segment spans residues 416 to 436; the sequence is GLLILALLGLTTLLGVVLVLF. At 437–637 the chain is on the cytoplasmic side; it reads CRRLLPGPGR…TNSPCGFSCL (201 aa). The SEFIR domain occupies 447–583; sequence TRPVLLLHAA…LLRDLPRLLR (137 aa).

Forms heterodimers with IL17RE; the heterodimer binds IL17C.

The protein resides in the cell membrane. In terms of biological role, specific functional receptor for IL17C, signaling through the NF-kappa-B and MAPK pathways. Requires TRAF3IP2 /ACT1 for signaling. Crucial regulator in innate immunity to bacterial pathogens. The protein is Interleukin-17 receptor E (Il17re) of Rattus norvegicus (Rat).